The primary structure comprises 208 residues: Large ribosomal subunit protein uL4 (208 aa).

Residues 47–84 (ARAARERSDVARTGKKFGRQKGGGTARHGDRRAPVFIG) are disordered. Positions 49 to 58 (AARERSDVAR) are enriched in basic and acidic residues.

Belongs to the universal ribosomal protein uL4 family. Part of the 50S ribosomal subunit.

One of the primary rRNA binding proteins, this protein initially binds near the 5'-end of the 23S rRNA. It is important during the early stages of 50S assembly. It makes multiple contacts with different domains of the 23S rRNA in the assembled 50S subunit and ribosome. Its function is as follows. Forms part of the polypeptide exit tunnel. This Rhizorhabdus wittichii (strain DSM 6014 / CCUG 31198 / JCM 15750 / NBRC 105917 / EY 4224 / RW1) (Sphingomonas wittichii) protein is Large ribosomal subunit protein uL4.